Consider the following 284-residue polypeptide: Nucleotide-binding protein VF_0384 (284 aa).

8 to 15 (GSSGAGKS) lines the ATP pocket. 56-59 (DIRN) provides a ligand contact to GTP.

Belongs to the RapZ-like family.

Functionally, displays ATPase and GTPase activities. The chain is Nucleotide-binding protein VF_0384 from Aliivibrio fischeri (strain ATCC 700601 / ES114) (Vibrio fischeri).